Here is a 966-residue protein sequence, read N- to C-terminus: Alpha-1,4 glucan phosphorylase L-1 isozyme, chloroplastic/amyloplastic (966 aa).

The N-terminal 50 residues, 1-50 (MATANGAHLFNHYSSNSRFIHFTSRNTSSKLFLTKTSHFRRPKRCFHVNN), are a transit peptide targeting the chloroplast. At K812 the chain carries N6-(pyridoxal phosphate)lysine.

The protein belongs to the glycogen phosphorylase family. Requires pyridoxal 5'-phosphate as cofactor. Tuber.

The protein resides in the plastid. It localises to the chloroplast. It is found in the amyloplast. The catalysed reaction is [(1-&gt;4)-alpha-D-glucosyl](n) + phosphate = [(1-&gt;4)-alpha-D-glucosyl](n-1) + alpha-D-glucose 1-phosphate. Functionally, phosphorylase is an important allosteric enzyme in carbohydrate metabolism. Enzymes from different sources differ in their regulatory mechanisms and in their natural substrates. However, all known phosphorylases share catalytic and structural properties. This chain is Alpha-1,4 glucan phosphorylase L-1 isozyme, chloroplastic/amyloplastic, found in Solanum tuberosum (Potato).